We begin with the raw amino-acid sequence, 521 residues long: NAD(P)H-quinone oxidoreductase subunit 2 (521 aa).

The next 14 membrane-spanning stretches (helical) occupy residues 16 to 36, 40 to 60, 80 to 100, 110 to 130, 133 to 153, 168 to 188, 212 to 232, 246 to 266, 280 to 300, 308 to 328, 336 to 356, 380 to 400, 402 to 422, and 468 to 488; these read ILPEGIVIVTLLLVLIVDLIG, VALALPYLAIAGLLVSVGLLV, LSIIFRAIIALSTVVTILMSV, LAEFIAILLTATLGGMFLSAA, LVMVFISLEMLSISSYLMTGY, LLIGASSSAIFLYGLSLLYGL, LGLAIALVFVIAGIAFKISAV, PTPVVAFLSVGSKAAGFAVAI, WHVIFTALAVLSMVLGNVVAL, MLAYSSIGQAGFVMIGLVAGS, VFYMLIYLFMNLGAFSCIILF, LGLSICLLSLGGIPPLAGFFG, IYIFWAGWQSGLYGLVLLGLV, and VGIVATLVATSLAGILANPLF.

It belongs to the complex I subunit 2 family. As to quaternary structure, NDH-1 can be composed of about 15 different subunits; different subcomplexes with different compositions have been identified which probably have different functions.

The protein resides in the cellular thylakoid membrane. It catalyses the reaction a plastoquinone + NADH + (n+1) H(+)(in) = a plastoquinol + NAD(+) + n H(+)(out). The catalysed reaction is a plastoquinone + NADPH + (n+1) H(+)(in) = a plastoquinol + NADP(+) + n H(+)(out). Its function is as follows. NDH-1 shuttles electrons from an unknown electron donor, via FMN and iron-sulfur (Fe-S) centers, to quinones in the respiratory and/or the photosynthetic chain. The immediate electron acceptor for the enzyme in this species is believed to be plastoquinone. Couples the redox reaction to proton translocation, and thus conserves the redox energy in a proton gradient. Cyanobacterial NDH-1 also plays a role in inorganic carbon-concentration. The protein is NAD(P)H-quinone oxidoreductase subunit 2 of Synechocystis sp. (strain ATCC 27184 / PCC 6803 / Kazusa).